The chain runs to 69 residues: Double-strand break reduction protein (69 aa).

In terms of biological role, helps to maintain the integrity of the chromosome by lowering the steady-state level of double strand breaks. This region of DNA acts as an antitoxin to toxin RalR, a DNase, but it seems to be sRNA RalA that has the antitoxin activity and not this putative protein. Therefore the identity of this as a protein-coding gene has been cast into doubt. The polypeptide is Double-strand break reduction protein (Escherichia coli (strain K12)).